Reading from the N-terminus, the 454-residue chain is Ornithine aminotransferase (454 aa).

Pyridoxal 5'-phosphate is bound by residues Gly-124, Thr-125, and Gln-267. Lys-293 is subject to N6-(pyridoxal phosphate)lysine. Thr-321 contributes to the pyridoxal 5'-phosphate binding site.

Belongs to the class-III pyridoxal-phosphate-dependent aminotransferase family. In terms of assembly, homotetramer; dimer of dimers. Pyridoxal 5'-phosphate serves as cofactor.

The catalysed reaction is L-ornithine + 2-oxoglutarate = L-glutamate 5-semialdehyde + L-glutamate. It carries out the reaction L-lysine + 2-oxoglutarate = (S)-2-amino-6-oxohexanoate + L-glutamate. Functionally, catalyzes the conversion of L-ornithine and 2-oxoglutarate to L-glutamate semialdehyde and L-glutamate. L-ornithine is the best substrate, but the enzyme also shows good activity toward L-lysine, and low activity toward D-ornithine, D-lysine, 5-aminovalerate, 6-aminohexanoate and GABA. The enzyme activity is specific for 2-oxoglutarate. The chain is Ornithine aminotransferase from Pyrococcus horikoshii (strain ATCC 700860 / DSM 12428 / JCM 9974 / NBRC 100139 / OT-3).